A 447-amino-acid polypeptide reads, in one-letter code: Zinc finger protein ZIC 1 (447 aa).

The segment at leucine 225–histidine 260 adopts a C2H2-type 1; atypical zinc-finger fold. Residues histidine 269–histidine 296 form a C2H2-type 2; atypical zinc finger. C2H2-type zinc fingers lie at residues phenylalanine 302–histidine 326, phenylalanine 332–histidine 356, and tyrosine 362–histidine 384. The segment at serine 375–glycine 434 is disordered. Residues serine 386–serine 427 show a composition bias toward low complexity.

This sequence belongs to the GLI C2H2-type zinc-finger protein family. Interacts (via the C2H2-type domains 3, 4 and 5) with MDFIC (via the C2H2-type domains 3, 4 and 5). Interacts with GLI1; the interaction enhances transcription activation. Interacts with GLI2. Interacts with GLI3; the interaction enhances transcription activation. Expressed in osteoblasts (at protein level). Expressed in the CNS. A high level expression is seen in the cerebellum, while a low level expression is seen in the olfactory bulb, diencephalon, and brainstem. Expressed in lumbar spine and iliac crest.

It localises to the nucleus. The protein localises to the cytoplasm. Its function is as follows. Acts as a transcriptional activator. Involved in neurogenesis. Plays important roles in the early stage of organogenesis of the CNS, as well as during dorsal spinal cord development and maturation of the cerebellum. Involved in the spatial distribution of mossy fiber (MF) neurons within the pontine gray nucleus (PGN). Plays a role in the regulation of MF axon pathway choice. Promotes MF migration towards ipsilaterally-located cerebellar territories. May have a role in shear flow mechanotransduction in osteocytes. Retains nuclear GLI1 and GLI3 in the cytoplasm. Binds to the minimal GLI-consensus sequence 5'-TGGGTGGTC-3'. The chain is Zinc finger protein ZIC 1 (Zic1) from Mus musculus (Mouse).